Consider the following 572-residue polypeptide: Transducin-like enhancer protein 6 (572 aa).

3 disordered regions span residues 1–30 (MTSR…SSPT), 92–121 (QSEE…SSFE), and 174–236 (KAKP…VQEP). Over residues 14-30 (KSTSPCPGISNSESSPT) the composition is skewed to polar residues. WD repeat units lie at residues 284–322 (AHGE…AEDR), 332–372 (TPGA…LHVK), 377–416 (CAGL…VVRD), 419–456 (GYPD…KPLE), 458–497 (QFKS…RHMV), 499–538 (QKDS…KVFE), and 540–571 (PEMS…YQIT). At S510 the chain carries Phosphoserine; by PKA.

Belongs to the WD repeat Groucho/TLE family. In terms of assembly, homodimers. Component of the subcortical maternal complex (SCMC), at least composed of NLRP5, KHDC3, OOEP, and TLE6. Within the complex, interacts with NLRP5, KHDC3 and OOEP. The SCMC may facilitate translocation of its components between the nuclear and cytoplasmic compartments. As part of the SCMC interacts with the SCMC-associated protein ZBED3. As part of the SCMC interacts with the SCMC-associated protein NLRP4F. As part of the SCMC interacts with the SCMC-associated protein CFL1/Cofilin-1. Interacts with FOXG1/BF-1; the interaction inhibits TLE1 interaction with FOXG1/BF-1. Interacts with NFATC1. Interacts with PAX6. Component of the subcortical maternal complex (SCMC), at least composed of NLRP5, KHDC3L, OOEP, and TLE6 isoform 1. Within the complex, interacts with NLRP5, KHDC3L and OOEP. The SCMC may facilitate translocation of its components between the nuclear and cytoplasmic compartments.

The protein resides in the cytoplasm. Its subcellular location is the nucleus. Functionally, component of the subcortical maternal complex (SCMC), a multiprotein complex that plays a key role in early embryonic development. The SCMC complex is a structural constituent of cytoplasmic lattices, which consist in fibrous structures found in the cytoplasm of oocytes and preimplantation embryos. They are required to store maternal proteins critical for embryonic development, such as proteins that control epigenetic reprogramming of the preimplantation embryo, and prevent their degradation or activation. Also required for spermatogenesis: regulates spermatogonia proliferation and cell cycle progression, potentially via regulation of cell cycle regulatory genes such as; CEBPB, CEBPA, CSF3, PCNA, and CDK4. Suppresses FOXG1/BF-1-mediated transcriptional repression by inhibiting interaction of the transcriptional corepressor TLE1 with FOXG1 which promotes cortical neuron differentiation. Acts as a transcriptional corepressor of NFATC1-mediated gene expression by contributing to PAX6-mediated repression. Its function is as follows. Component of the subcortical maternal complex (SCMC), a multiprotein complex that plays a key role in early embryonic development. This Homo sapiens (Human) protein is Transducin-like enhancer protein 6.